The chain runs to 382 residues: Pyrimidine monooxygenase RutA (382 aa).

FMN contacts are provided by residues 68 to 69 (IK), Asn134, Glu143, 159 to 160 (RY), and Ser209.

It belongs to the NtaA/SnaA/DszA monooxygenase family. RutA subfamily.

It carries out the reaction uracil + FMNH2 + NADH + O2 = (Z)-3-ureidoacrylate + FMN + NAD(+) + H2O + H(+). It catalyses the reaction thymine + FMNH2 + NADH + O2 = (Z)-2-methylureidoacrylate + FMN + NAD(+) + H2O + H(+). Functionally, catalyzes the pyrimidine ring opening between N-3 and C-4 by an unusual flavin hydroperoxide-catalyzed mechanism, adding oxygen atoms in the process to yield ureidoacrylate peracid, that immediately reacts with FMN forming ureidoacrylate and FMN-N(5)-oxide. The FMN-N(5)-oxide reacts spontaneously with NADH to produce FMN. Requires the flavin reductase RutF to regenerate FMN in vivo. The protein is Pyrimidine monooxygenase RutA of Escherichia coli O45:K1 (strain S88 / ExPEC).